The sequence spans 430 residues: Trigger factor (430 aa).

Positions 157 to 242 (GDLVALETWS…AVEVSEPVLP (86 aa)) constitute a PPIase FKBP-type domain.

This sequence belongs to the FKBP-type PPIase family. Tig subfamily.

The protein resides in the cytoplasm. The enzyme catalyses [protein]-peptidylproline (omega=180) = [protein]-peptidylproline (omega=0). Involved in protein export. Acts as a chaperone by maintaining the newly synthesized protein in an open conformation. Functions as a peptidyl-prolyl cis-trans isomerase. This Xanthomonas euvesicatoria pv. vesicatoria (strain 85-10) (Xanthomonas campestris pv. vesicatoria) protein is Trigger factor.